The primary structure comprises 1017 residues: Semaphorin-6D (1017 aa).

An N-terminal signal peptide occupies residues 1–20; it reads MRVFLLCAYILLLMISQLRA. Topologically, residues 21 to 606 are extracellular; that stretch reads VSFPEDDEPL…GESNQMVHMN (586 aa). Residues 27-512 enclose the Sema domain; sequence DEPLNTVDYH…FSSCVIRIPL (486 aa). N-linked (GlcNAc...) asparagine glycosylation is present at Asn-51. 4 cysteine pairs are disulfide-bonded: Cys-108–Cys-118, Cys-136–Cys-145, Cys-259–Cys-370, and Cys-284–Cys-329. Asn-283 is a glycosylation site (N-linked (GlcNAc...) asparagine). Asn-435 and Asn-461 each carry an N-linked (GlcNAc...) asparagine glycan. Cystine bridges form between Cys-477/Cys-506, Cys-515/Cys-533, Cys-521/Cys-568, and Cys-525/Cys-541. Residues 514–569 form the PSI domain; the sequence is RCERYGSCKKSCIASRDPYCGWLSQGSCGRVTPGMLAEGYEQDAEFGNTAHLGDCH. A helical membrane pass occupies residues 607 to 627; it reads VLITCVFAAFVLGAFIAGVAV. Residues 628–1017 are Cytoplasmic-facing; that stretch reads YCYRDMFVRK…SVRPLNKYTY (390 aa). Residues Ser-667, Ser-678, and Ser-688 each carry the phosphoserine modification. Disordered stretches follow at residues 688 to 719, 731 to 769, 783 to 818, and 873 to 912; these read SRKELPPNGDTKSMVMDHRGQPPELAALPTPE, AMKSHSEKAHGHGASRKETPQFFPSSPPPHSPLSHGHIP, TSFSNSNAHKAEKKLQNIDHPLTKSSSKRDHRRSVD, and LYSPPSTLPRNSPTKRVDVPTTPGVPMTSLGRQRGYHKNS. Phosphothreonine is present on Thr-717. The span at 734-749 shows a compositional bias: basic and acidic residues; the sequence is SHSEKAHGHGASRKET. Residues Ser-875, Ser-901, and Ser-927 each carry the phosphoserine modification. Residues 875-886 show a composition bias toward polar residues; the sequence is SPPSTLPRNSPT. Residues 965–981 are compositionally biased toward polar residues; sequence LQPSLSRQSSYTSNGTL. Residues 965 to 1017 are disordered; the sequence is LQPSLSRQSSYTSNGTLPRTGLKRTPSLKPDVPPKPSFVPQTPSVRPLNKYTY.

This sequence belongs to the semaphorin family.

It localises to the cell membrane. Shows growth cone collapsing activity on dorsal root ganglion (DRG) neurons in vitro. May be a stop signal for the DRG neurons in their target areas, and possibly also for other neurons. May also be involved in the maintenance and remodeling of neuronal connections. Ligand of TREM2 with PLXNA1 as coreceptor in dendritic cells, plays a role in the generation of immune responses and skeletal homeostasis. The polypeptide is Semaphorin-6D (SEMA6D) (Pongo abelii (Sumatran orangutan)).